The chain runs to 398 residues: Serpin-Z2A (398 aa).

Residues 343 to 367 (GTEAAAATIAKAVLLSASPPSDMDF) form an RCL region.

Belongs to the serpin family.

Inhibits chymotrypsin and cathepsin G in vitro. This Triticum aestivum (Wheat) protein is Serpin-Z2A.